Here is a 266-residue protein sequence, read N- to C-terminus: Diphthine synthase (266 aa).

Residues Leu9, Asp84, Val87, 112-113 (SI), Leu169, Ala210, and His235 each bind S-adenosyl-L-methionine.

Belongs to the diphthine synthase family. Homodimer.

The catalysed reaction is 2-[(3S)-amino-3-carboxypropyl]-L-histidyl-[translation elongation factor 2] + 3 S-adenosyl-L-methionine = diphthine-[translation elongation factor 2] + 3 S-adenosyl-L-homocysteine + 3 H(+). Its pathway is protein modification; peptidyl-diphthamide biosynthesis. Its function is as follows. S-adenosyl-L-methionine-dependent methyltransferase that catalyzes the trimethylation of the amino group of the modified target histidine residue in translation elongation factor 2 (EF-2), to form an intermediate called diphthine. The three successive methylation reactions represent the second step of diphthamide biosynthesis. This is Diphthine synthase from Methanosarcina mazei (strain ATCC BAA-159 / DSM 3647 / Goe1 / Go1 / JCM 11833 / OCM 88) (Methanosarcina frisia).